We begin with the raw amino-acid sequence, 578 residues long: MGNAIREKTIHGIAASSGIAIAKAYRLETPDLAAEKRTVADVEAEIARLEAAVAKAKEELEAIKQHALEKLGEDKAAIFAAHLLVLDDPELLNPIKEKIQTERVNAEYALDETALFFISMFEAMDNEYMKERAADIRDVTKRVLAHLLGVTISNPSLISEEVVIIAEDLTPSDTAQLNRQYVKGFATDIGGRTSHSAIMARSLEIPAVVGTKTVTAEVKNGDIVIVDGLDGQVIINPSPELLAQYEQKRARYEAQKAEWAKLVHEATVTADGIHVELAANIGTPDDVKGALANGAEGIGLYRTEFLYMGRSELPTEDEQFVAYKTVLEQMNGKPVVVRTLDIGGDKELPYLQLPKEMNPFLGFRAIRLCLEMQDMFRTQLRALLRASVYGNLKIMFPMIATLDEFRQAKAILLEEKEALLRQGVAVADGIEVGMMVEIPAAAVMADQFAKEVDFFSIGTNDLIQYTMAADRMNERVAYLYQPYNPAILRLISHVIDAAHREGKWVGMCGEMAGDPIAIPILLALGLDEFSMSATSILPARAQLKKLAKEEAARIKETVLSLGTAEEVVSFVKRTFSLA.

Residue His195 is the Tele-phosphohistidine intermediate of the active site. Phosphoenolpyruvate contacts are provided by Arg302 and Arg338. Positions 437 and 461 each coordinate Mg(2+). Phosphoenolpyruvate contacts are provided by residues 460–461 and Arg471; that span reads ND. Residue Cys508 is the Proton donor of the active site.

It belongs to the PEP-utilizing enzyme family. Homodimer. Mg(2+) is required as a cofactor.

It localises to the cytoplasm. The enzyme catalyses L-histidyl-[protein] + phosphoenolpyruvate = N(pros)-phospho-L-histidyl-[protein] + pyruvate. General (non sugar-specific) component of the phosphoenolpyruvate-dependent sugar phosphotransferase system (sugar PTS). This major carbohydrate active-transport system catalyzes the phosphorylation of incoming sugar substrates concomitantly with their translocation across the cell membrane. Enzyme I transfers the phosphoryl group from phosphoenolpyruvate (PEP) to the phosphoryl carrier protein (HPr). In Geobacillus stearothermophilus (Bacillus stearothermophilus), this protein is Phosphoenolpyruvate-protein phosphotransferase (ptsI).